A 321-amino-acid chain; its full sequence is Basic leucine zipper 34 (321 aa).

The interval 97–189 is disordered; the sequence is TDDDNLHSNP…SGNRILDPKR (93 aa). 3 stretches are compositionally biased toward low complexity: residues 110–133, 145–155, and 172–182; these read NNKN…NSFN, NMNNNINNNYN, and SNNNSGDSSGN. A bZIP domain is found at 186-238; the sequence is DPKRVKRILANRQSAQRSRVRKLQYISELERSVTSLQAEVSVLSPRVAFLDHQ. The segment at 188 to 207 is basic motif; that stretch reads KRVKRILANRQSAQRSRVRK. Residues 214-235 form a leucine-zipper region; that stretch reads LERSVTSLQAEVSVLSPRVAFL.

Forms heterodimers with BZIP18, BZIP43 and VIP1/BZIP51. As to expression, expressed in vascular tissues of leaves, stems and siliques, anthers, filaments, tapetum, mature pollen grains, pistil vascular tissues and papillar cells, and funiculi.

The protein localises to the nucleus. Its function is as follows. Transcriptional activator involved in the sporophytic control of cell wall patterning and gametophytic control of pollen development. May play a role in the control of metabolic pathways regulating cellular transport and lipid metabolism. In Arabidopsis thaliana (Mouse-ear cress), this protein is Basic leucine zipper 34.